Reading from the N-terminus, the 185-residue chain is MIDEIQLEAEEHMTASVEHTREQLLTIRTGRANPAMFNGLVAEYYGVPTPITQMATISVPEPRMLLIKPYEQSVMNEIENAIRNSDLGVNPTNDGQVLRVTIPQLTEERRRDMVKMAKSKGEDGKIAIRNIRRRAMEQLKKLQKDGDAGEDEVIAAEKEMEKITSGYIEQVDKLVANKEEELMEV.

Belongs to the RRF family.

It is found in the cytoplasm. Functionally, responsible for the release of ribosomes from messenger RNA at the termination of protein biosynthesis. May increase the efficiency of translation by recycling ribosomes from one round of translation to another. In Corynebacterium aurimucosum (strain ATCC 700975 / DSM 44827 / CIP 107346 / CN-1) (Corynebacterium nigricans), this protein is Ribosome-recycling factor.